Reading from the N-terminus, the 245-residue chain is DNA polymerase sliding clamp 2 (245 aa).

Belongs to the PCNA family. Homotrimer. The subunits circularize to form a toroid; DNA passes through its center. Replication factor C (RFC) is required to load the toroid on the DNA.

Functionally, sliding clamp subunit that acts as a moving platform for DNA processing. Responsible for tethering the catalytic subunit of DNA polymerase and other proteins to DNA during high-speed replication. The protein is DNA polymerase sliding clamp 2 of Sulfolobus acidocaldarius (strain ATCC 33909 / DSM 639 / JCM 8929 / NBRC 15157 / NCIMB 11770).